The sequence spans 258 residues: MAESRTSADGGMETSYGFREVADGEKQGLVNEVFHKVAKRYDIMNDVMSMGLHRAWKDAMISALNPRKDPSYKVLDVAGGTGDIAFRIVEASNRLAHATVLDINGSMLGVGAERAAKKKLTDNLTFVEANAEELPFEPNSFDAYTIAFGIRNVPRIDVALKEAYRVLKRGGRLLVLEFSEVDLPLLDRVYEAWSFNAIPQFGKAITGDAEPYQYLVESIRKFPNQQDFATMIREAGFSRVNFTNYTGGIAALHSGWKL.

Residues T81, D102, and 130–131 each bind S-adenosyl-L-methionine; that span reads NA.

This sequence belongs to the class I-like SAM-binding methyltransferase superfamily. MenG/UbiE family.

It carries out the reaction a 2-demethylmenaquinol + S-adenosyl-L-methionine = a menaquinol + S-adenosyl-L-homocysteine + H(+). It catalyses the reaction a 2-methoxy-6-(all-trans-polyprenyl)benzene-1,4-diol + S-adenosyl-L-methionine = a 5-methoxy-2-methyl-3-(all-trans-polyprenyl)benzene-1,4-diol + S-adenosyl-L-homocysteine + H(+). The protein operates within quinol/quinone metabolism; menaquinone biosynthesis; menaquinol from 1,4-dihydroxy-2-naphthoate: step 2/2. Its pathway is cofactor biosynthesis; ubiquinone biosynthesis. Its function is as follows. Methyltransferase required for the conversion of demethylmenaquinol (DMKH2) to menaquinol (MKH2) and the conversion of 2-polyprenyl-6-methoxy-1,4-benzoquinol (DDMQH2) to 2-polyprenyl-3-methyl-6-methoxy-1,4-benzoquinol (DMQH2). The sequence is that of Ubiquinone/menaquinone biosynthesis C-methyltransferase UbiE from Rhizobium rhizogenes (strain K84 / ATCC BAA-868) (Agrobacterium radiobacter).